Reading from the N-terminus, the 145-residue chain is Putative esterase PA1618 (145 aa).

Belongs to the thioesterase PaaI family.

The sequence is that of Putative esterase PA1618 from Pseudomonas aeruginosa (strain ATCC 15692 / DSM 22644 / CIP 104116 / JCM 14847 / LMG 12228 / 1C / PRS 101 / PAO1).